The following is a 1125-amino-acid chain: tRNA (34-2'-O)-methyltransferase regulator WDR6 (1125 aa).

Met1 is modified (N-acetylmethionine). 19 WD repeats span residues 53–97 (VKRV…VVKV), 105–143 (RELW…LYDP), 147–189 (CMLQ…IWYP), 200–238 (APDR…LWKV), 247–285 (RVQN…VWSH), 289–327 (ILQA…LWHL), 335–376 (LGVS…LYDL), 381–422 (WEQL…VVPI), 425–470 (PTAA…ISAA), 476–520 (IFVK…LFPV), 559–598 (PVST…FVHG), 604–642 (VLRQ…VWSP), 645–684 (HEKL…LYRA), 739–785 (LIDI…VWAV), 848–897 (RNKH…LFLL), 905–950 (HLLA…FWDL), 974–1016 (GTPS…VFTL), 1040–1077 (EEYS…FWRL), and 1083–1125 (TFMN…NWYD).

This sequence belongs to the WD repeat WDR6 family. Interacts with FTSJ1; the interaction is direct, and required for 2'-O-methylation of position 34 in substrate tRNAs. Interacts with IRS4. Interacts with STK11/LKB1.

The protein resides in the cytoplasm. In terms of biological role, together with methyltransferase FTSJ1, methylates the 2'-O-ribose of nucleotides at position 34 of the tRNA anticodon loop of substrate tRNAs. Required for the correct positioning of the substrate tRNA for methylation. Required to suppress amino acid starvation-induced autophagy. Enhances the STK11/LKB1-induced cell growth suppression activity. This Mus musculus (Mouse) protein is tRNA (34-2'-O)-methyltransferase regulator WDR6 (Wdr6).